Here is a 227-residue protein sequence, read N- to C-terminus: N-acetyltransferase family 8 member 7 (227 aa).

2 helical membrane-spanning segments follow: residues 36-56 and 58-78; these read MLLL…LFLA and GSWL…WFLA. Residues 61–220 form the N-acetyltransferase domain; it reads LLVLLSILTL…PMINLKYSLT (160 aa).

The protein belongs to the camello family.

The protein localises to the membrane. The catalysed reaction is L-lysyl-[protein] + acetyl-CoA = N(6)-acetyl-L-lysyl-[protein] + CoA + H(+). Its function is as follows. Has histone acetyltransferase activity in vitro, with specificity for histone H4. The polypeptide is N-acetyltransferase family 8 member 7 (Mus musculus (Mouse)).